Reading from the N-terminus, the 262-residue chain is Probable proteasome subunit beta type-7 (262 aa).

Belongs to the peptidase T1B family. In terms of assembly, the 26S proteasome consists of a 20S proteasome core and two 19S regulatory subunits. The 20S proteasome core is composed of 28 subunits that are arranged in four stacked rings, resulting in a barrel-shaped structure. The two end rings are each formed by seven alpha subunits, and the two central rings are each formed by seven beta subunits. The catalytic chamber with the active sites is on the inside of the barrel.

The protein localises to the cytoplasm. Its subcellular location is the nucleus. Its function is as follows. Non-catalytic component of the proteasome, a multicatalytic proteinase complex which is characterized by its ability to cleave peptides with Arg, Phe, Tyr, Leu, and Glu adjacent to the leaving group at neutral or slightly basic pH. The proteasome has an ATP-dependent proteolytic activity. This Schizosaccharomyces pombe (strain 972 / ATCC 24843) (Fission yeast) protein is Probable proteasome subunit beta type-7.